We begin with the raw amino-acid sequence, 554 residues long: Phosphomethylpyrimidine synthase (554 aa).

Substrate contacts are provided by residues asparagine 188, methionine 217, tyrosine 246, histidine 282, 302–304 (SRG), 343–346 (DGLR), and glutamate 382. Histidine 386 provides a ligand contact to Zn(2+). Tyrosine 409 provides a ligand contact to substrate. Histidine 450 is a Zn(2+) binding site. [4Fe-4S] cluster contacts are provided by cysteine 530, cysteine 533, and cysteine 538.

Belongs to the ThiC family. In terms of assembly, homodimer. It depends on [4Fe-4S] cluster as a cofactor.

The catalysed reaction is 5-amino-1-(5-phospho-beta-D-ribosyl)imidazole + S-adenosyl-L-methionine = 4-amino-2-methyl-5-(phosphooxymethyl)pyrimidine + CO + 5'-deoxyadenosine + formate + L-methionine + 3 H(+). The protein operates within cofactor biosynthesis; thiamine diphosphate biosynthesis. In terms of biological role, catalyzes the synthesis of the hydroxymethylpyrimidine phosphate (HMP-P) moiety of thiamine from aminoimidazole ribotide (AIR) in a radical S-adenosyl-L-methionine (SAM)-dependent reaction. The chain is Phosphomethylpyrimidine synthase from Coxiella burnetii (strain RSA 493 / Nine Mile phase I).